The following is a 227-amino-acid chain: MAYPFQLGLQDATSPIMEELTNFHDHTLMIVFLISSLVLYIISLMLTTKLTHTSTMDAQEVETIWTILPAVILILIALPSLRILYMMDEINNPVLTVKTMGHQWYWSYEYTDYEDLCFDSYMIPTTDLKPGELRLLEVDNRVVLPMELPIRMLISSEDVLHSWAVPSLGLKTDAIPGRLNQATLTSNRPGLFYGQCSEICGSNHSFMPIVLEMVPLKHFENWSASMI.

The Mitochondrial intermembrane portion of the chain corresponds to 1–14; it reads MAYPFQLGLQDATS. Residues 15-45 traverse the membrane as a helical segment; the sequence is PIMEELTNFHDHTLMIVFLISSLVLYIISLM. Topologically, residues 46-59 are mitochondrial matrix; the sequence is LTTKLTHTSTMDAQ. A helical membrane pass occupies residues 60-87; sequence EVETIWTILPAVILILIALPSLRILYMM. Residues 88-227 are Mitochondrial intermembrane-facing; that stretch reads DEINNPVLTV…HFENWSASMI (140 aa). Residues His-161, Cys-196, Glu-198, Cys-200, His-204, and Met-207 each coordinate Cu cation. Glu-198 lines the Mg(2+) pocket.

This sequence belongs to the cytochrome c oxidase subunit 2 family. In terms of assembly, component of the cytochrome c oxidase (complex IV, CIV), a multisubunit enzyme composed of 14 subunits. The complex is composed of a catalytic core of 3 subunits MT-CO1, MT-CO2 and MT-CO3, encoded in the mitochondrial DNA, and 11 supernumerary subunits COX4I, COX5A, COX5B, COX6A, COX6B, COX6C, COX7A, COX7B, COX7C, COX8 and NDUFA4, which are encoded in the nuclear genome. The complex exists as a monomer or a dimer and forms supercomplexes (SCs) in the inner mitochondrial membrane with NADH-ubiquinone oxidoreductase (complex I, CI) and ubiquinol-cytochrome c oxidoreductase (cytochrome b-c1 complex, complex III, CIII), resulting in different assemblies (supercomplex SCI(1)III(2)IV(1) and megacomplex MCI(2)III(2)IV(2)). Found in a complex with TMEM177, COA6, COX18, COX20, SCO1 and SCO2. Interacts with TMEM177 in a COX20-dependent manner. Interacts with COX20. Interacts with COX16. Requires Cu cation as cofactor.

It is found in the mitochondrion inner membrane. The enzyme catalyses 4 Fe(II)-[cytochrome c] + O2 + 8 H(+)(in) = 4 Fe(III)-[cytochrome c] + 2 H2O + 4 H(+)(out). Component of the cytochrome c oxidase, the last enzyme in the mitochondrial electron transport chain which drives oxidative phosphorylation. The respiratory chain contains 3 multisubunit complexes succinate dehydrogenase (complex II, CII), ubiquinol-cytochrome c oxidoreductase (cytochrome b-c1 complex, complex III, CIII) and cytochrome c oxidase (complex IV, CIV), that cooperate to transfer electrons derived from NADH and succinate to molecular oxygen, creating an electrochemical gradient over the inner membrane that drives transmembrane transport and the ATP synthase. Cytochrome c oxidase is the component of the respiratory chain that catalyzes the reduction of oxygen to water. Electrons originating from reduced cytochrome c in the intermembrane space (IMS) are transferred via the dinuclear copper A center (CU(A)) of subunit 2 and heme A of subunit 1 to the active site in subunit 1, a binuclear center (BNC) formed by heme A3 and copper B (CU(B)). The BNC reduces molecular oxygen to 2 water molecules using 4 electrons from cytochrome c in the IMS and 4 protons from the mitochondrial matrix. This is Cytochrome c oxidase subunit 2 (MT-CO2) from Batomys granti (Luzon hairy-tailed rat).